We begin with the raw amino-acid sequence, 59 residues long: Large ribosomal subunit protein bL32 (59 aa).

A compositionally biased stretch (basic residues) spans 1-16; the sequence is MAVPKRKTSPSKRGMR. The disordered stretch occupies residues 1–59; that stretch reads MAVPKRKTSPSKRGMRRSADALKAPTYVEDKNSGELRRPHHIDLKSGMYRGRQVLEAKE. The span at 28-44 shows a compositional bias: basic and acidic residues; that stretch reads VEDKNSGELRRPHHIDL.

It belongs to the bacterial ribosomal protein bL32 family.

This chain is Large ribosomal subunit protein bL32, found in Brucella anthropi (strain ATCC 49188 / DSM 6882 / CCUG 24695 / JCM 21032 / LMG 3331 / NBRC 15819 / NCTC 12168 / Alc 37) (Ochrobactrum anthropi).